The primary structure comprises 250 residues: MLFLHDVWVNWFEGEENGYNVCHFHEWRKEDTVELLDQVPLLRVPSVLFHYIENDLSELPKGLLEDVHQKSYIRKNHERTKLEYCFVVTDGIGILAVDTIGYTIPVRKSRLIPRQEQLVYEMVKDVEPETYEFEPKKLESSKEYHILSLAPEHVRGLTRKERQIKQLMFMALDQLKGLKNRAEIGYWYTEWNPHMYEQIKRMSFEEIWDMLYNETIEGWSDKHLAFCENLIKGQPFFEKLWEMENESKVN.

This sequence belongs to the UPF0736 family.

The chain is UPF0736 protein YjbA (yjbA) from Bacillus subtilis (strain 168).